Here is a 291-residue protein sequence, read N- to C-terminus: 4-hydroxy-tetrahydrodipicolinate synthase (291 aa).

Thr45 is a pyruvate binding site. Tyr131 serves as the catalytic Proton donor/acceptor. The Schiff-base intermediate with substrate role is filled by Lys159. Ile202 provides a ligand contact to pyruvate.

Belongs to the DapA family. Homotetramer; dimer of dimers.

The protein localises to the cytoplasm. The catalysed reaction is L-aspartate 4-semialdehyde + pyruvate = (2S,4S)-4-hydroxy-2,3,4,5-tetrahydrodipicolinate + H2O + H(+). The protein operates within amino-acid biosynthesis; L-lysine biosynthesis via DAP pathway; (S)-tetrahydrodipicolinate from L-aspartate: step 3/4. Functionally, catalyzes the condensation of (S)-aspartate-beta-semialdehyde [(S)-ASA] and pyruvate to 4-hydroxy-tetrahydrodipicolinate (HTPA). The polypeptide is 4-hydroxy-tetrahydrodipicolinate synthase (Methanosarcina acetivorans (strain ATCC 35395 / DSM 2834 / JCM 12185 / C2A)).